The following is a 579-amino-acid chain: Carboxysome shell carbonic anhydrase (579 aa).

The interval 72–95 (GGGRVRSARDQRQPGWVRRDKGAT) is disordered. A compositionally biased stretch (basic and acidic residues) spans 78–93 (SARDQRQPGWVRRDKG). Position 240 (C240) interacts with Zn(2+). The Proton acceptor role is filled by D242. The Zn(2+) site is built by H308 and C319.

It belongs to the beta-class carbonic anhydrase family. CsoSCA subfamily. As to quaternary structure, homodimer. Requires Zn(2+) as cofactor.

It localises to the carboxysome. It carries out the reaction hydrogencarbonate + H(+) = CO2 + H2O. With respect to regulation, inhibited by dithiothreitol, partially inhibited by acetatzolamide and cyanide. Its function is as follows. Reversible hydration of carbon dioxide. Essential for photosynthetic carbon dioxide fixation, supplies CO(2) to RuBisCO (ribulose bisphosphate carboxylase, cbbL-cbbS) in the carboxysome. The protein is Carboxysome shell carbonic anhydrase of Parasynechococcus marenigrum (strain WH8102).